The primary structure comprises 415 residues: L-cysteine:1D-myo-inositol 2-amino-2-deoxy-alpha-D-glucopyranoside ligase (415 aa).

The interval M1 to R20 is disordered. Residue C43 participates in Zn(2+) binding. L-cysteinyl-5'-AMP-binding positions include C43–T46, T58, and N81–T83. The 'HIGH' region signature appears at I45–H55. Residues E187–P192 carry the 'ERGGDP' region motif. L-cysteinyl-5'-AMP is bound at residue W227. Residue C231 participates in Zn(2+) binding. An L-cysteinyl-5'-AMP-binding site is contributed by G249 to D251. Residue H256 coordinates Zn(2+). L-cysteinyl-5'-AMP is bound at residue I283. The 'KMSKS' region signature appears at K289 to S293.

Belongs to the class-I aminoacyl-tRNA synthetase family. MshC subfamily. Monomer. Zn(2+) is required as a cofactor.

It catalyses the reaction 1D-myo-inositol 2-amino-2-deoxy-alpha-D-glucopyranoside + L-cysteine + ATP = 1D-myo-inositol 2-(L-cysteinylamino)-2-deoxy-alpha-D-glucopyranoside + AMP + diphosphate + H(+). Its function is as follows. Catalyzes the ATP-dependent condensation of GlcN-Ins and L-cysteine to form L-Cys-GlcN-Ins. This Rhodococcus jostii (strain RHA1) protein is L-cysteine:1D-myo-inositol 2-amino-2-deoxy-alpha-D-glucopyranoside ligase.